The primary structure comprises 287 residues: Protein REVEILLE 3 (287 aa).

The HTH myb-type domain occupies 56–110; sequence TITKSRENWTEQEHDKFLEALHLFDRDWKKIKAFVGSKTVIQIRSHAQKYFLKVQ. A DNA-binding region (H-T-H motif) is located at residues 83-106; sequence WKKIKAFVGSKTVIQIRSHAQKYF. The disordered stretch occupies residues 111–135; sequence KNGTKEHLPPPRPKRKANHPYPQKA.

It is found in the nucleus. Probable transcription factor. The sequence is that of Protein REVEILLE 3 (RVE3) from Arabidopsis thaliana (Mouse-ear cress).